Consider the following 430-residue polypeptide: Adenylosuccinate synthetase (430 aa).

GTP contacts are provided by residues 12 to 18 (GDEGKGK) and 40 to 42 (GHT). The Proton acceptor role is filled by D13. Mg(2+)-binding residues include D13 and G40. IMP is bound by residues 13-16 (DEGK), 38-41 (NAGH), T130, R144, Q224, T239, and R303. H41 (proton donor) is an active-site residue. Residue 299 to 305 (TVTGRKR) coordinates substrate. GTP-binding positions include R305, 331–333 (KLD), and 413–415 (STS).

The protein belongs to the adenylosuccinate synthetase family. As to quaternary structure, homodimer. The cofactor is Mg(2+).

Its subcellular location is the cytoplasm. The catalysed reaction is IMP + L-aspartate + GTP = N(6)-(1,2-dicarboxyethyl)-AMP + GDP + phosphate + 2 H(+). It functions in the pathway purine metabolism; AMP biosynthesis via de novo pathway; AMP from IMP: step 1/2. In terms of biological role, plays an important role in the de novo pathway of purine nucleotide biosynthesis. Catalyzes the first committed step in the biosynthesis of AMP from IMP. In Cereibacter sphaeroides (strain KD131 / KCTC 12085) (Rhodobacter sphaeroides), this protein is Adenylosuccinate synthetase.